We begin with the raw amino-acid sequence, 229 residues long: MTGGQGVTIKELPAELRPRERLLAAGVQALSNAELLAILLRTGTRTESALDVARRLLSGPDGLQFLAGATLEELQQQKGIGLAKAAELKAALELGRRLAAFTLSRTVIRNPRDVAGLLLDEMRYLDRENFRTVSLNTKNQVLGIDNVSVGSLNSSLAHPREVFKDPIRRSAAAIILAHNHPSGDPTPSQEDIMVTRRLVEAGHILGIEVLDHLIIGDGRFTSLKERNLL.

Positions 107–229 (VIRNPRDVAG…FTSLKERNLL (123 aa)) constitute an MPN domain. Zn(2+)-binding residues include H178, H180, and D191. The JAMM motif signature appears at 178–191 (HNHPSGDPTPSQED).

It belongs to the UPF0758 family.

The sequence is that of UPF0758 protein Moth_0536 from Moorella thermoacetica (strain ATCC 39073 / JCM 9320).